Here is a 122-residue protein sequence, read N- to C-terminus: Holo-[acyl-carrier-protein] synthase (122 aa).

Mg(2+)-binding residues include aspartate 8 and glutamate 58.

It belongs to the P-Pant transferase superfamily. AcpS family. Mg(2+) serves as cofactor.

It is found in the cytoplasm. The catalysed reaction is apo-[ACP] + CoA = holo-[ACP] + adenosine 3',5'-bisphosphate + H(+). Transfers the 4'-phosphopantetheine moiety from coenzyme A to a Ser of acyl-carrier-protein. In Levilactobacillus brevis (strain ATCC 367 / BCRC 12310 / CIP 105137 / JCM 1170 / LMG 11437 / NCIMB 947 / NCTC 947) (Lactobacillus brevis), this protein is Holo-[acyl-carrier-protein] synthase.